The sequence spans 267 residues: Multivesicular body subunit 12A (267 aa).

In terms of domain architecture, MABP spans 7–146 (AAPLSGVGWA…SFAIWCKKGA (140 aa)). Residues 154–159 (PVPKPR) carry the SH3-binding motif. In terms of domain architecture, UMA spans 210–259 (MDGVPFTLHPKFERSPKSDSSAILTDLTVKSLADIEKEYNYTFVVERTAA).

It belongs to the MVB12 family. As to quaternary structure, component of the ESCRT-I complex (endosomal sorting complex required for transport I).

The protein localises to the cytoplasm. It is found in the endosome. Its subcellular location is the late endosome membrane. In terms of biological role, component of the ESCRT-I complex, a regulator of vesicular trafficking process. Required for the sorting of endocytic ubiquitinated cargos into multivesicular bodies. The sequence is that of Multivesicular body subunit 12A (MVB12A) from Gallus gallus (Chicken).